Consider the following 428-residue polypeptide: Serine--tRNA ligase (428 aa).

Position 237 to 239 (237 to 239 (TAE)) interacts with L-serine. Residue 268–270 (RSE) coordinates ATP. Glu291 serves as a coordination point for L-serine. 355–358 (EISS) provides a ligand contact to ATP. Ser390 serves as a coordination point for L-serine.

It belongs to the class-II aminoacyl-tRNA synthetase family. Type-1 seryl-tRNA synthetase subfamily. Homodimer. The tRNA molecule binds across the dimer.

Its subcellular location is the cytoplasm. The enzyme catalyses tRNA(Ser) + L-serine + ATP = L-seryl-tRNA(Ser) + AMP + diphosphate + H(+). The catalysed reaction is tRNA(Sec) + L-serine + ATP = L-seryl-tRNA(Sec) + AMP + diphosphate + H(+). Its pathway is aminoacyl-tRNA biosynthesis; selenocysteinyl-tRNA(Sec) biosynthesis; L-seryl-tRNA(Sec) from L-serine and tRNA(Sec): step 1/1. In terms of biological role, catalyzes the attachment of serine to tRNA(Ser). Is also able to aminoacylate tRNA(Sec) with serine, to form the misacylated tRNA L-seryl-tRNA(Sec), which will be further converted into selenocysteinyl-tRNA(Sec). This is Serine--tRNA ligase from Hydrogenovibrio crunogenus (strain DSM 25203 / XCL-2) (Thiomicrospira crunogena).